The chain runs to 434 residues: Maltoporin (434 aa).

An N-terminal signal peptide occupies residues 1-25; the sequence is MMTTLRKLPLALAIAAGVLTTQAMA.

Belongs to the porin LamB (TC 1.B.3) family. Homotrimer formed of three 18-stranded antiparallel beta-barrels, containing three independent channels.

The protein resides in the cell outer membrane. The catalysed reaction is beta-maltose(in) = beta-maltose(out). Its function is as follows. Involved in the transport of maltose and maltodextrins. The polypeptide is Maltoporin (Serratia proteamaculans (strain 568)).